A 533-amino-acid polypeptide reads, in one-letter code: Peptidyl-prolyl cis-trans isomerase-like 2 (533 aa).

The U-box domain occupies 38 to 111 (KRLPFYCCSL…DEYFCPVTYK (74 aa)). The PPIase cyclophilin-type domain occupies 284 to 438 (KKSYARIITN…REIKIKQIQM (155 aa)). Residues 443–519 (FEEYQRRLKN…SNEGEELQKK (77 aa)) are a coiled coil. The segment covering 454-477 (LTHEANAERENEEMRKRREKEEKM) has biased composition (basic and acidic residues). Residues 454–533 (LTHEANAERE…KTTFGNFDNF (80 aa)) are disordered. Over residues 523–533 (TKTTFGNFDNF) the composition is skewed to polar residues.

The protein belongs to the cyclophilin-type PPIase family. PPIL2 subfamily.

It localises to the nucleus. It carries out the reaction [protein]-peptidylproline (omega=180) = [protein]-peptidylproline (omega=0). The catalysed reaction is S-ubiquitinyl-[E2 ubiquitin-conjugating enzyme]-L-cysteine + [acceptor protein]-L-lysine = [E2 ubiquitin-conjugating enzyme]-L-cysteine + N(6)-ubiquitinyl-[acceptor protein]-L-lysine.. The protein operates within protein modification; protein ubiquitination. May catalyze the cis-trans isomerization of proline imidic peptide bonds in oligopeptides thereby assisting the folding of proteins. May also function as a chaperone, playing a role in intracellular transport of proteins. May also have a protein ubiquitin ligase activity acting as an E3 ubiquitin protein ligase or as a ubiquitin-ubiquitin ligase promoting elongation of ubiquitin chains on proteins. The chain is Peptidyl-prolyl cis-trans isomerase-like 2 (cyp14) from Rhizopus delemar (strain RA 99-880 / ATCC MYA-4621 / FGSC 9543 / NRRL 43880) (Mucormycosis agent).